Reading from the N-terminus, the 204-residue chain is UPF0637 protein SAB0972c (204 aa).

Belongs to the UPF0637 family.

The chain is UPF0637 protein SAB0972c from Staphylococcus aureus (strain bovine RF122 / ET3-1).